The sequence spans 216 residues: Protein-L-isoaspartate O-methyltransferase (216 aa).

The active site involves Ser66.

It belongs to the methyltransferase superfamily. L-isoaspartyl/D-aspartyl protein methyltransferase family.

It localises to the cytoplasm. It catalyses the reaction [protein]-L-isoaspartate + S-adenosyl-L-methionine = [protein]-L-isoaspartate alpha-methyl ester + S-adenosyl-L-homocysteine. In terms of biological role, catalyzes the methyl esterification of L-isoaspartyl residues in peptides and proteins that result from spontaneous decomposition of normal L-aspartyl and L-asparaginyl residues. It plays a role in the repair and/or degradation of damaged proteins. In Dechloromonas aromatica (strain RCB), this protein is Protein-L-isoaspartate O-methyltransferase.